A 327-amino-acid chain; its full sequence is GMP reductase (327 aa).

The active-site Thioimidate intermediate is Cys176. NADP(+) is bound at residue 205–228 (IIADGGIRTHGDIAKSIRFGASMV).

This sequence belongs to the IMPDH/GMPR family. GuaC type 2 subfamily.

The enzyme catalyses IMP + NH4(+) + NADP(+) = GMP + NADPH + 2 H(+). Catalyzes the irreversible NADPH-dependent deamination of GMP to IMP. It functions in the conversion of nucleobase, nucleoside and nucleotide derivatives of G to A nucleotides, and in maintaining the intracellular balance of A and G nucleotides. The sequence is that of GMP reductase from Streptococcus pyogenes serotype M6 (strain ATCC BAA-946 / MGAS10394).